The primary structure comprises 249 residues: DNA polymerase sliding clamp 1 (249 aa).

This sequence belongs to the PCNA family. Forms heterodimers with PCNA2, which then recruit PCNA3; does not form homotrimers. The heterodimers interact with RfcS homotetramers. Heterotrimer which circularizes head-to-tail (head is at N-terminus, tail is at C-terminus) to form a toroid; DNA passes through its center. Replication factor C (RFC) is required to load the toroid on the DNA. Heterotrimer interacts, probably via this subunit, with flap endonuclease 1 (fen), Hjc, Dpo4, and XPF.

In terms of biological role, one of the sliding clamp subunits that acts as a moving platform for DNA processing. Responsible for tethering the catalytic subunit of DNA polymerase to DNA during high-speed replication. Heterotrimer stimulates the Holliday junction resolvase Hjc. DNA polymerase I, DNA ligase and the flap endonuclease may be constitutively associated with the PCNA heterotrimer forming a scanning complex able to couple DNA synthesis and Okazaki fragment maturation. The polypeptide is DNA polymerase sliding clamp 1 (Saccharolobus solfataricus (strain ATCC 35092 / DSM 1617 / JCM 11322 / P2) (Sulfolobus solfataricus)).